We begin with the raw amino-acid sequence, 249 residues long: General transcription factor IIF subunit 2 (249 aa).

An N-acetylalanine modification is found at alanine 2. Residues lysine 22, lysine 33, and lysine 137 each carry the N6-acetyllysine modification. Residue serine 142 is modified to Phosphoserine. Residues glycine 227 and histidine 229 each contribute to the DNA site. A Phosphoserine modification is found at serine 248.

The protein belongs to the TFIIF beta subunit family. In terms of assembly, heterodimer of an alpha and a beta subunit. Interacts with HTATSF1 and GPBP1. Interacts with URI1. Interacts with GTF2B (via N-terminus); this interaction is inhibited in presence of GTF2F1. Part of TBP-based Pol II pre-initiation complex (PIC), in which Pol II core assembles with general transcription factors and other specific initiation factors including GTF2E1, GTF2E2, GTF2F1, GTF2F2, TCEA1, ERCC2, ERCC3, GTF2H2, GTF2H3, GTF2H4, GTF2H5, GTF2A1, GTF2A2, GTF2B and TBP; this large multi-subunit PIC complex mediates DNA unwinding and targets Pol II core to the transcription start site where the first phosphodiester bond forms.

Its subcellular location is the nucleus. TFIIF is a general transcription initiation factor that binds to RNA polymerase II and helps to recruit it to the initiation complex in collaboration with TFIIB. The protein is General transcription factor IIF subunit 2 (GTF2F2) of Homo sapiens (Human).